A 530-amino-acid polypeptide reads, in one-letter code: MSQLDTTTPSGDYLMALDAGTGSVRAVIFDLNGNQIAAGQAEWLHLPVPDVPGSMEFDLTTNWQLTCQCIRQALHLAKLPASAIRAVAACSMREGIVLYDRSGTPIWACANVDARASREVSELKELHNNGFELEVYQCSGQTLALSAMPRLLWLAHYRPDIYRQAGTLTMISDWLANMLSGELAVDPSNAGTTGMLDLVTRNWQPNLLEMAGLRADILSPVKETGTLLGHVTAKAAQECGLLAGTPVVMGGGDVQLGCLGLGVVHAGQTAVLGGTFWQQVVNLPQPIIDPNMNTRINPHVIPGMVQAESISFFTGLTMRWFRDAFCAEEKLLAQRLGIDTYSLLEDMAARVPAGAYGVMPIFSDVMRFKSWYHAAPSFINLSLDPEKCNKATLFRALEENAAIVSACNLAQIAEFSGVKASSVVFAGGGAKGKLWSQILADVTGVPVKVPVVKEATALGCAIAAGVGVGLYEALDKTGERLVRWEREYIPNTEHKALYQAAKTNWQAVYTDQLGLVDCGLTTSLWKAPCL.

The protein belongs to the FGGY kinase family.

The protein localises to the cytoplasm. The enzyme catalyses (S)-4,5-dihydroxypentane-2,3-dione + ATP = (2S)-2-hydroxy-3,4-dioxopentyl phosphate + ADP + H(+). In terms of biological role, catalyzes the phosphorylation of autoinducer-2 (AI-2) to phospho-AI-2, which subsequently inactivates the transcriptional regulator LsrR and leads to the transcription of the lsr operon. Phosphorylates the ring-open form of (S)-4,5-dihydroxypentane-2,3-dione (DPD), which is the precursor to all AI-2 signaling molecules, at the C5 position. This is Autoinducer-2 kinase from Yersinia pestis bv. Antiqua (strain Antiqua).